Here is a 1396-residue protein sequence, read N- to C-terminus: DNA-directed RNA polymerase subunit beta' (1396 aa).

Positions 72, 74, 87, and 90 each coordinate Zn(2+). Residues Asp-463, Asp-465, and Asp-467 each contribute to the Mg(2+) site. Zn(2+) contacts are provided by Cys-814, Cys-889, Cys-896, and Cys-899.

This sequence belongs to the RNA polymerase beta' chain family. As to quaternary structure, the RNAP catalytic core consists of 2 alpha, 1 beta, 1 beta' and 1 omega subunit. When a sigma factor is associated with the core the holoenzyme is formed, which can initiate transcription. Mg(2+) is required as a cofactor. The cofactor is Zn(2+).

The catalysed reaction is RNA(n) + a ribonucleoside 5'-triphosphate = RNA(n+1) + diphosphate. In terms of biological role, DNA-dependent RNA polymerase catalyzes the transcription of DNA into RNA using the four ribonucleoside triphosphates as substrates. The polypeptide is DNA-directed RNA polymerase subunit beta' (Chlamydia muridarum (strain MoPn / Nigg)).